Here is a 106-residue protein sequence, read N- to C-terminus: Small ribosomal subunit protein bS16 (106 aa).

Residues 84–106 (KREARNNPEKAVPRKERKAADGK) form a disordered region.

This chain is Small ribosomal subunit protein bS16, found in Rhodopseudomonas palustris (strain ATCC BAA-98 / CGA009).